The sequence spans 704 residues: Elongation factor G (704 aa).

In terms of domain architecture, tr-type G spans 8-290 (ARYRNIGISA…AVIDYLPSPV (283 aa)). Residues 17 to 24 (AHIDAGKT), 88 to 92 (DTPGH), and 142 to 145 (NKMD) contribute to the GTP site.

This sequence belongs to the TRAFAC class translation factor GTPase superfamily. Classic translation factor GTPase family. EF-G/EF-2 subfamily.

The protein resides in the cytoplasm. Functionally, catalyzes the GTP-dependent ribosomal translocation step during translation elongation. During this step, the ribosome changes from the pre-translocational (PRE) to the post-translocational (POST) state as the newly formed A-site-bound peptidyl-tRNA and P-site-bound deacylated tRNA move to the P and E sites, respectively. Catalyzes the coordinated movement of the two tRNA molecules, the mRNA and conformational changes in the ribosome. This is Elongation factor G from Salmonella arizonae (strain ATCC BAA-731 / CDC346-86 / RSK2980).